Reading from the N-terminus, the 432-residue chain is D-amino acid dehydrogenase (432 aa).

Position 3–17 (3–17) interacts with FAD; the sequence is VVILGSGVVGVTSAW.

The protein belongs to the DadA oxidoreductase family. It depends on FAD as a cofactor.

It catalyses the reaction a D-alpha-amino acid + A + H2O = a 2-oxocarboxylate + AH2 + NH4(+). The protein operates within amino-acid degradation; D-alanine degradation; NH(3) and pyruvate from D-alanine: step 1/1. Functionally, oxidative deamination of D-amino acids. This chain is D-amino acid dehydrogenase, found in Salmonella paratyphi C (strain RKS4594).